Here is a 165-residue protein sequence, read N- to C-terminus: Protein SprT (165 aa).

The SprT-like domain occupies 10-158 (EACYRQAEHF…CRRCKATLVF (149 aa)). Histidine 69 is a binding site for Zn(2+). The active site involves glutamate 70. Histidine 73 serves as a coordination point for Zn(2+).

Belongs to the SprT family. Requires Zn(2+) as cofactor.

It localises to the cytoplasm. The chain is Protein SprT from Pseudomonas aeruginosa (strain LESB58).